The chain runs to 1242 residues: ATP-dependent helicase/nuclease subunit A (1242 aa).

The 474-residue stretch at serine 13–arginine 486 folds into the UvrD-like helicase ATP-binding domain. Residue alanine 34–threonine 41 participates in ATP binding. A UvrD-like helicase C-terminal domain is found at glycine 506–glycine 806.

It belongs to the helicase family. AddA subfamily. As to quaternary structure, heterodimer of AddA and AddB/RexB. Mg(2+) serves as cofactor.

It catalyses the reaction Couples ATP hydrolysis with the unwinding of duplex DNA by translocating in the 3'-5' direction.. The enzyme catalyses ATP + H2O = ADP + phosphate + H(+). The heterodimer acts as both an ATP-dependent DNA helicase and an ATP-dependent, dual-direction single-stranded exonuclease. Recognizes the chi site generating a DNA molecule suitable for the initiation of homologous recombination. The AddA nuclease domain is required for chi fragment generation; this subunit has the helicase and 3' -&gt; 5' nuclease activities. The sequence is that of ATP-dependent helicase/nuclease subunit A from Bacillus cytotoxicus (strain DSM 22905 / CIP 110041 / 391-98 / NVH 391-98).